The primary structure comprises 205 residues: ATP-dependent Clp protease proteolytic subunit (205 aa).

Ser109 (nucleophile) is an active-site residue. His134 is an active-site residue.

The protein belongs to the peptidase S14 family. As to quaternary structure, fourteen ClpP subunits assemble into 2 heptameric rings which stack back to back to give a disk-like structure with a central cavity, resembling the structure of eukaryotic proteasomes.

The protein resides in the cytoplasm. It catalyses the reaction Hydrolysis of proteins to small peptides in the presence of ATP and magnesium. alpha-casein is the usual test substrate. In the absence of ATP, only oligopeptides shorter than five residues are hydrolyzed (such as succinyl-Leu-Tyr-|-NHMec, and Leu-Tyr-Leu-|-Tyr-Trp, in which cleavage of the -Tyr-|-Leu- and -Tyr-|-Trp bonds also occurs).. Functionally, cleaves peptides in various proteins in a process that requires ATP hydrolysis. Has a chymotrypsin-like activity. Plays a major role in the degradation of misfolded proteins. In Baumannia cicadellinicola subsp. Homalodisca coagulata, this protein is ATP-dependent Clp protease proteolytic subunit.